The sequence spans 155 residues: uncharacterized protein (155 aa).

The SCP domain maps to 37-140; the sequence is IAELRKKLNL…GGYRLKTTDN (104 aa).

This is an uncharacterized protein from Borreliella burgdorferi (strain ATCC 35210 / DSM 4680 / CIP 102532 / B31) (Borrelia burgdorferi).